A 437-amino-acid chain; its full sequence is Neomycin resistance protein (437 aa).

Disordered regions lie at residues 161–285 and 305–338; these read GQRG…EEEA and VSGAGHRVDPLPAPAPGPDRRRHRGRRHGRPVPD. The span at 203-229 shows a compositional bias: low complexity; that stretch reads PPTGARSPGATAGARATASTSSSSVRS. The span at 324 to 338 shows a compositional bias: basic residues; it reads RRRHRGRRHGRPVPD.

Belongs to the Gram-positive plasmids replication protein type 1 family.

This Streptomyces cyanogenus protein is Neomycin resistance protein.